Reading from the N-terminus, the 206-residue chain is N-(5'-phosphoribosyl)anthranilate isomerase (206 aa).

The protein belongs to the TrpF family.

The catalysed reaction is N-(5-phospho-beta-D-ribosyl)anthranilate = 1-(2-carboxyphenylamino)-1-deoxy-D-ribulose 5-phosphate. Its pathway is amino-acid biosynthesis; L-tryptophan biosynthesis; L-tryptophan from chorismate: step 3/5. In Pseudomonas syringae pv. syringae (strain B728a), this protein is N-(5'-phosphoribosyl)anthranilate isomerase.